The chain runs to 56 residues: uncharacterized protein (56 aa).

This is an uncharacterized protein from Acidianus convivator (ABV).